A 592-amino-acid polypeptide reads, in one-letter code: MITRMSSLFLHTLRDDPADAELASHKLLVRAGYIRRVAPGVYSWLPMGLRVLRKVENVVRREMDAIGGQELMFPALLPKEPYEVTRRWDEYGPELFRLKDRKEADYLLGPTHEELFTWLVKGELNSYKDFPKVLYQIQTKYRDEARPRAGILRGREFVMKDSYSFNMTDEGLDESYRLHRKAYQRIFDALGIEYVICYATSGAMGGSASEEFLAVAADGEDTFVRSTESDYAANVEAVVSIPPAEESVEDKPEAVSHESPGADTIETLVEWANEAGLTVDGAPVTAKDTLKCIVCKVTRPGEDEDGNPYAPELTGVLVPGDREVDMKRLEASLEPAVVELADDEDFKKYPFLVKGFVGPRTFADNDLRMLADPRVVKGTAWITGADEKDRHYSNLVAGRDFTPDGYVEAAEVREGDPSPDGKGVLTLSRGIEIGHIFQLGRKYTEAFDVQILDENGRRTVPTMGSYGIGVSRLLAVVAEQMHDEKGLRWPRSIAPYDVHVVIANKDEAAGEAARELAEALSDAGLEVLFDDRPKVSPGVKFKDSELLGMPQVVVVGRGFAEGKVELRDRLNDERSEIDYADAVDVITKAARA.

This sequence belongs to the class-II aminoacyl-tRNA synthetase family. ProS type 1 subfamily. In terms of assembly, homodimer.

It localises to the cytoplasm. The enzyme catalyses tRNA(Pro) + L-proline + ATP = L-prolyl-tRNA(Pro) + AMP + diphosphate. Catalyzes the attachment of proline to tRNA(Pro) in a two-step reaction: proline is first activated by ATP to form Pro-AMP and then transferred to the acceptor end of tRNA(Pro). As ProRS can inadvertently accommodate and process non-cognate amino acids such as alanine and cysteine, to avoid such errors it has two additional distinct editing activities against alanine. One activity is designated as 'pretransfer' editing and involves the tRNA(Pro)-independent hydrolysis of activated Ala-AMP. The other activity is designated 'posttransfer' editing and involves deacylation of mischarged Ala-tRNA(Pro). The misacylated Cys-tRNA(Pro) is not edited by ProRS. The sequence is that of Proline--tRNA ligase from Corynebacterium urealyticum (strain ATCC 43042 / DSM 7109).